We begin with the raw amino-acid sequence, 483 residues long: Protein nucleotidyltransferase YdiU (483 aa).

Positions 87, 89, 90, 110, 122, 123, 173, and 180 each coordinate ATP. Asp-249 acts as the Proton acceptor in catalysis. Mg(2+)-binding residues include Asn-250 and Asp-259. ATP is bound at residue Asp-259.

This sequence belongs to the SELO family. The cofactor is Mg(2+). Mn(2+) serves as cofactor.

The enzyme catalyses L-seryl-[protein] + ATP = 3-O-(5'-adenylyl)-L-seryl-[protein] + diphosphate. It catalyses the reaction L-threonyl-[protein] + ATP = 3-O-(5'-adenylyl)-L-threonyl-[protein] + diphosphate. The catalysed reaction is L-tyrosyl-[protein] + ATP = O-(5'-adenylyl)-L-tyrosyl-[protein] + diphosphate. It carries out the reaction L-histidyl-[protein] + UTP = N(tele)-(5'-uridylyl)-L-histidyl-[protein] + diphosphate. The enzyme catalyses L-seryl-[protein] + UTP = O-(5'-uridylyl)-L-seryl-[protein] + diphosphate. It catalyses the reaction L-tyrosyl-[protein] + UTP = O-(5'-uridylyl)-L-tyrosyl-[protein] + diphosphate. Nucleotidyltransferase involved in the post-translational modification of proteins. It can catalyze the addition of adenosine monophosphate (AMP) or uridine monophosphate (UMP) to a protein, resulting in modifications known as AMPylation and UMPylation. The sequence is that of Protein nucleotidyltransferase YdiU from Yersinia pseudotuberculosis serotype O:1b (strain IP 31758).